The following is a 293-amino-acid chain: Ribosomal protein L11 methyltransferase (293 aa).

Thr145, Gly166, Asp188, and Asn230 together coordinate S-adenosyl-L-methionine.

The protein belongs to the methyltransferase superfamily. PrmA family.

Its subcellular location is the cytoplasm. The catalysed reaction is L-lysyl-[protein] + 3 S-adenosyl-L-methionine = N(6),N(6),N(6)-trimethyl-L-lysyl-[protein] + 3 S-adenosyl-L-homocysteine + 3 H(+). Its function is as follows. Methylates ribosomal protein L11. The chain is Ribosomal protein L11 methyltransferase from Escherichia coli O81 (strain ED1a).